The following is a 328-amino-acid chain: C-type lectin domain family 4 member K (328 aa).

The Cytoplasmic portion of the chain corresponds to 1-43 (MTVEKEAPDAHFTVDKQNISLWPREPPPKSGPSLVPGKTPTVR). Residues 44–64 (AALICLTLVLVASVLLQAVLY) form a helical; Signal-anchor for type II membrane protein membrane-spanning segment. Residues 65–328 (PRFMGTISDV…CKRPYVPSEP (264 aa)) lie on the Extracellular side of the membrane. Residues N87, N113, and N180 are each glycosylated (N-linked (GlcNAc...) asparagine). Residues 145–190 (EEVSTLNAQIPELKSDLEKASALNTKIRALQGSLENMSKLLKRQND) adopt a coiled-coil conformation. The C-type lectin domain maps to 202 to 320 (FKGNFYYFSL…CDKTFLFICK (119 aa)). Cystine bridges form between C223–C319 and C295–C311.

Homotrimer. Exclusively expressed by Langerhans cells. Expressed in astrocytoma and malignant ependymoma, but not in normal brain tissues.

The protein resides in the membrane. Calcium-dependent lectin displaying mannose-binding specificity. Induces the formation of Birbeck granules (BGs); is a potent regulator of membrane superimposition and zippering. Binds to sulfated as well as mannosylated glycans, keratan sulfate (KS) and beta-glucans. Facilitates uptake of antigens and is involved in the routing and/or processing of antigen for presentation to T cells. Major receptor on primary Langerhans cells for Candida species, Saccharomyces species, and Malassezia furfur. Protects against human immunodeficiency virus-1 (HIV-1) infection. Binds to high-mannose structures present on the envelope glycoprotein which is followed by subsequent targeting of the virus to the Birbeck granules leading to its rapid degradation. The protein is C-type lectin domain family 4 member K (CD207) of Homo sapiens (Human).